The primary structure comprises 626 residues: Fructose-1,6-bisphosphatase class 3 (626 aa).

It belongs to the FBPase class 3 family. The cofactor is Mn(2+).

The catalysed reaction is beta-D-fructose 1,6-bisphosphate + H2O = beta-D-fructose 6-phosphate + phosphate. The protein operates within carbohydrate biosynthesis; gluconeogenesis. In Enterococcus faecalis (strain ATCC 700802 / V583), this protein is Fructose-1,6-bisphosphatase class 3.